The chain runs to 62 residues: Large ribosomal subunit protein bL28 (62 aa).

Belongs to the bacterial ribosomal protein bL28 family.

This Helicobacter pylori (strain P12) protein is Large ribosomal subunit protein bL28.